Reading from the N-terminus, the 60-residue chain is MAVPKKKTSKSRKNMRRAHDFLTAPAASVCPQCKSPKLPHRACASCGTYKGREVVKTEEI.

This sequence belongs to the bacterial ribosomal protein bL32 family.

The chain is Large ribosomal subunit protein bL32 from Geobacter sulfurreducens (strain ATCC 51573 / DSM 12127 / PCA).